Here is a 93-residue protein sequence, read N- to C-terminus: Defensin-like protein 209 (93 aa).

A signal peptide spans 1–19 (MKITILFLTLLVLSSSCTS). 3 cysteine pairs are disulfide-bonded: cysteine 63–cysteine 80, cysteine 66–cysteine 85, and cysteine 70–cysteine 87.

Belongs to the DEFL family.

Its subcellular location is the secreted. In Arabidopsis thaliana (Mouse-ear cress), this protein is Defensin-like protein 209.